The sequence spans 786 residues: Protein RDM16 (786 aa).

Basic and acidic residues-rich tracts occupy residues 1–80 (MDKE…SRDR), 87–112 (RSHE…GARD), and 123–143 (NGER…KDAQ). Disordered stretches follow at residues 1–223 (MDKE…SANL), 255–283 (KKAT…STGT), 532–557 (RPIE…EQKK), and 616–642 (EREQ…KERK). Over residues 145-164 (SEGSGATNPTSGVTMGASTY) the composition is skewed to polar residues. Residues 165 to 176 (SSIPSEASAAPS) show a composition bias toward low complexity. Polar residues predominate over residues 177 to 189 (QTLLTKVSSISTT). Basic and acidic residues predominate over residues 190–203 (DENKASVVRSHEVP). Low complexity predominate over residues 268–283 (TRVPPSTTTPAVSTGT). The segment covering 534–547 (IEPPAEAAPPPPQP) has biased composition (pro residues).

It is found in the nucleus. It localises to the nucleoplasm. Functionally, functions in the RNA-directed DNA methylation (RdDM) pathway. Acts as a pre-mRNA splicing factor, likely by affecting Pol V transcripts. Affects DNA methylation of transposable elements (TEs) and preferentially influences NRPD1- and ROS1-targeted loci. This is Protein RDM16 from Arabidopsis thaliana (Mouse-ear cress).